We begin with the raw amino-acid sequence, 156 residues long: MRRFLFLSLGVLVVAFSLNGIGADHHCPWDWFSFDRFCYKVIKQRKNWQDAERFCGQLQNGSHLASIQSWAESKYVAMLLSNNAFLDTVWIGLFEPEKNRSLEWSDGSGFCYTGWERRKRNNVDNKKYCVELSWMSDYLEWNNVKCESRNIFICKI.

The N-terminal stretch at 1–23 (MRRFLFLSLGVLVVAFSLNGIGA) is a signal peptide. 3 cysteine pairs are disulfide-bonded: Cys-27-Cys-38, Cys-55-Cys-154, and Cys-129-Cys-146. The 122-residue stretch at 34–155 (FDRFCYKVIK…CESRNIFICK (122 aa)) folds into the C-type lectin domain. Asn-60 and Asn-99 each carry an N-linked (GlcNAc...) asparagine glycan. The Sugar-binding motif lies at 119 to 121 (KRN). Position 142 (Asn-142) interacts with Ca(2+).

This sequence belongs to the true venom lectin family. Expressed by the venom gland.

Its subcellular location is the secreted. In terms of biological role, lectin which recognizes specific carbohydrate structures and agglutinates a variety of animal cells by binding to cell-surface glycoproteins and glycolipids. May be a calcium-dependent lectin. This Leioheterodon madagascariensis (Malagasy giant hognose snake) protein is C-type lectin lectoxin-Lei1.